A 336-amino-acid polypeptide reads, in one-letter code: Phosphonate dehydrogenase (336 aa).

Residues 155–156, glutamate 175, 235–237, and aspartate 261 each bind NAD(+); these read AI and PCR. Residue arginine 237 is part of the active site. Residue glutamate 266 is part of the active site. The Proton donor role is filled by histidine 292. Residue 292–295 participates in NAD(+) binding; it reads HIGS.

Homodimer.

It carries out the reaction phosphonate + NAD(+) + H2O = phosphate + NADH + H(+). Its activity is regulated as follows. Inhibited by NaCl, NADH and sulfite. In terms of biological role, catalyzes phosphite (phosphonate) oxidation. This Stutzerimonas stutzeri (Pseudomonas stutzeri) protein is Phosphonate dehydrogenase (ptxD).